The chain runs to 1081 residues: Zinc finger protein 827 (1081 aa).

Positions 1–10 (MPRRKQEQPK) are enriched in basic and acidic residues. Residues 1–14 (MPRRKQEQPKRLPS) are mediates direct interaction with RBBP4. Positions 1–77 (MPRRKQEQPK…DTSLGSTTPS (77 aa)) are disordered. Residues 3–5 (RRK) carry the RRK motif; mediates NuRD recruitment to telomeres motif. A compositionally biased stretch (polar residues) spans 62–77 (EQSTSPDTSLGSTTPS). Residues Lys-176, Lys-216, and Lys-226 each participate in a glycyl lysine isopeptide (Lys-Gly) (interchain with G-Cter in SUMO2) cross-link. Disordered stretches follow at residues 258–280 (KKVSERSLTPGQEHPPPASSFLS) and 305–348 (EKSS…SLEL). Over residues 327-344 (VSPPPPPPPPPPPPPPPQ) the composition is skewed to pro residues. Residues Lys-360 and Lys-372 each participate in a glycyl lysine isopeptide (Lys-Gly) (interchain with G-Cter in SUMO2) cross-link. C2H2-type zinc fingers lie at residues 374–396 (FQCPICGLVIKRKSYWKRHMVIH), 402–424 (HQCPLCPFRCARKDNLKSHMKVH), and 433–455 (FQCQLCPFTSSRHFSLKLHMRCH). Residues Lys-466, Lys-475, Lys-523, Lys-549, Lys-580, Lys-587, and Lys-597 each participate in a glycyl lysine isopeptide (Lys-Gly) (interchain with G-Cter in SUMO2) cross-link. A disordered region spans residues 525–553 (EPKEDNGLPTSFTLNTADRPANHTKLKDP). Residues 616–627 (VFSPESEVSTPG) are compositionally biased toward polar residues. A disordered region spans residues 616–640 (VFSPESEVSTPGVSEDALKPQEGKG). Positions 631–640 (DALKPQEGKG) are enriched in basic and acidic residues. Residues Lys-634, Lys-639, and Lys-658 each participate in a glycyl lysine isopeptide (Lys-Gly) (interchain with G-Cter in SUMO2) cross-link. Lys-673 is covalently cross-linked (Glycyl lysine isopeptide (Lys-Gly) (interchain with G-Cter in SUMO1); alternate). A Glycyl lysine isopeptide (Lys-Gly) (interchain with G-Cter in SUMO2); alternate cross-link involves residue Lys-673. Glycyl lysine isopeptide (Lys-Gly) (interchain with G-Cter in SUMO2) cross-links involve residues Lys-704, Lys-710, Lys-742, Lys-778, and Lys-798. 2 C2H2-type zinc fingers span residues 817–839 (FPCDVCGKVFGRQQTLSRHLSLH) and 845–867 (YKCHLCPYAAKCRANLNQHLTVH). Glycyl lysine isopeptide (Lys-Gly) (interchain with G-Cter in SUMO2) cross-links involve residues Lys-870 and Lys-891. 2 consecutive C2H2-type zinc fingers follow at residues 897–919 (YSCHVCGFETELNVQFVSHMSLH) and 929–952 (ICCTACDFVTMEEAEIKTHIGTKH). The span at 947 to 960 (HIGTKHTGEDRKTP) shows a compositional bias: basic and acidic residues. The segment at 947–1013 (HIGTKHTGED…GSQPSLNSEE (67 aa)) is disordered. Residue Lys-958 forms a Glycyl lysine isopeptide (Lys-Gly) (interchain with G-Cter in SUMO2) linkage. Positions 961-978 (SESNSPSSSSLSALSDSA) are enriched in low complexity. The span at 979–988 (NSKDDSDGSQ) shows a compositional bias: basic and acidic residues. Residue Lys-1014 forms a Glycyl lysine isopeptide (Lys-Gly) (interchain with G-Cter in SUMO2) linkage. C2H2-type zinc fingers lie at residues 1019-1041 (FECVFCNFVCKTKNMFERHLQIH) and 1047-1069 (FECDVCHKFMKTPEQLLEHKKCH).

This sequence belongs to the krueppel C2H2-type zinc-finger protein family. Part of a transcription inhibitory ribonucleoprotein complex composed at least of the circular RNA circZNF827, HNRNPK and HNRNPL. Interacts with the nucleosome remodeling and histone deacetylase/NuRD complex. Interacts with RBBP4; the interaction is direct and recruits RBBP4, a component of the NuRD complex, to telomeres.

It is found in the nucleus. Its subcellular location is the chromosome. It localises to the telomere. Its function is as follows. As part of a ribonucleoprotein complex composed at least of HNRNPK, HNRNPL and the circular RNA circZNF827 that nucleates the complex on chromatin, may negatively regulate the transcription of genes involved in neuronal differentiation. Could also recruit the nucleosome remodeling and histone deacetylase/NuRD complex to telomeric regions of chromosomes to regulate chromatin remodeling as part of telomere maintenance. This is Zinc finger protein 827 (ZNF827) from Macaca fascicularis (Crab-eating macaque).